The chain runs to 190 residues: Bifunctional D-Ala-D-Ala dipeptidase and D-Ala-D-Ala carboxypeptidase VanXYC (190 aa).

Glu66 is a Mg(2+) binding site. Residues Gln67, Ala88, Ser93, His95, and Asp102 each coordinate a dipeptide. The Cu(2+) site is built by His95 and Asp102. Zn(2+) is bound by residues His95 and Asp102. Catalysis depends on Glu153, which acts as the catalytic acid/base residue. A dipeptide contacts are provided by Trp155 and His156. His156 contacts Cu(2+). His156 is a binding site for Zn(2+).

This sequence belongs to the peptidase M15D family. As to quaternary structure, homodimer.

It localises to the cytoplasm. It carries out the reaction D-alanyl-D-alanine + H2O = 2 D-alanine. The enzyme catalyses UDP-N-acetyl-alpha-D-muramoyl-L-alanyl-gamma-D-glutamyl-L-lysyl-D-alanyl-D-alanine + H2O = UDP-N-acetyl-alpha-D-muramoyl-L-alanyl-gamma-D-glutamyl-L-lysyl-D-alanine + D-alanine. Functionally, bifunctional enzyme, exhibiting dipeptidase and carboxypeptidase activities. Catalyzes hydrolysis of the D-alanyl-D-alanine dipeptide. Cleaves the C-terminal D-alanine residue of UDP-muramyl-pentapeptide[Ala] (UDP-MurNAc-L-Ala-D-Glu-L-Lys-D-Ala-D-Ala). Shows no activity against the pentapeptide with a C-terminal D-serine residue. Together with VanC/VanC1 and VanT, required for vancomycin resistance in E.gallinarum strain BM4174. This Enterococcus gallinarum protein is Bifunctional D-Ala-D-Ala dipeptidase and D-Ala-D-Ala carboxypeptidase VanXYC.